A 669-amino-acid polypeptide reads, in one-letter code: Zeaxanthin epoxidase, chloroplastic (669 aa).

The N-terminal 49 residues, 1–49 (MYSTVFYTSVHPSTSVLSRKQLPLLISKDFSAELYHSLPCRSLENGHIN), are a transit peptide targeting the chloroplast. FAD is bound by residues 87–115 (KVLV…LVFE) and 365–378 (TFSW…LLGD). Positions 553–617 (IVLSRDEDVP…HGTWVTDNEG (65 aa)) constitute an FHA domain.

The cofactor is FAD.

The protein localises to the plastid. It is found in the chloroplast. The enzyme catalyses all-trans-zeaxanthin + 4 reduced [2Fe-2S]-[ferredoxin] + 2 O2 + 4 H(+) = all-trans-violaxanthin + 4 oxidized [2Fe-2S]-[ferredoxin] + 2 H2O. It functions in the pathway plant hormone biosynthesis; abscisate biosynthesis. Its function is as follows. Converts zeaxanthin into antheraxanthin and subsequently violaxanthin. Involved in the epoxidation of zeaxanthin. Plays an important role in resistance to stresses, seed development and dormancy. The protein is Zeaxanthin epoxidase, chloroplastic of Solanum lycopersicum (Tomato).